The primary structure comprises 224 residues: Pyridoxal 5'-phosphate synthase subunit PdxT (224 aa).

An L-glutamine-binding site is contributed by 55 to 57 (GES). The active-site Nucleophile is Cys87. Residues Arg113 and 142–143 (IR) contribute to the L-glutamine site. Residues His178 and Glu180 each act as charge relay system in the active site.

The protein belongs to the glutaminase PdxT/SNO family. In the presence of PdxS, forms a dodecamer of heterodimers. Only shows activity in the heterodimer.

The catalysed reaction is aldehydo-D-ribose 5-phosphate + D-glyceraldehyde 3-phosphate + L-glutamine = pyridoxal 5'-phosphate + L-glutamate + phosphate + 3 H2O + H(+). The enzyme catalyses L-glutamine + H2O = L-glutamate + NH4(+). The protein operates within cofactor biosynthesis; pyridoxal 5'-phosphate biosynthesis. Functionally, catalyzes the hydrolysis of glutamine to glutamate and ammonia as part of the biosynthesis of pyridoxal 5'-phosphate. The resulting ammonia molecule is channeled to the active site of PdxS. This is Pyridoxal 5'-phosphate synthase subunit PdxT from Syntrophus aciditrophicus (strain SB).